The following is a 190-amino-acid chain: Orotate phosphoribosyltransferase (190 aa).

114–122 (EDVVTTGGS) serves as a coordination point for 5-phospho-alpha-D-ribose 1-diphosphate. Residues Thr118 and Arg146 each coordinate orotate.

The protein belongs to the purine/pyrimidine phosphoribosyltransferase family. PyrE subfamily. In terms of assembly, homodimer. The cofactor is Mg(2+).

The catalysed reaction is orotidine 5'-phosphate + diphosphate = orotate + 5-phospho-alpha-D-ribose 1-diphosphate. It participates in pyrimidine metabolism; UMP biosynthesis via de novo pathway; UMP from orotate: step 1/2. In terms of biological role, catalyzes the transfer of a ribosyl phosphate group from 5-phosphoribose 1-diphosphate to orotate, leading to the formation of orotidine monophosphate (OMP). This Thermoanaerobacter sp. (strain X514) protein is Orotate phosphoribosyltransferase.